A 197-amino-acid chain; its full sequence is RING-H2 finger protein ATL80 (197 aa).

A helical transmembrane segment spans residues L30–V50. The RING-type; atypical zinc finger occupies C111–R153. Positions P168 to P197 are disordered.

Belongs to the RING-type zinc finger family. ATL subfamily.

Its subcellular location is the membrane. It carries out the reaction S-ubiquitinyl-[E2 ubiquitin-conjugating enzyme]-L-cysteine + [acceptor protein]-L-lysine = [E2 ubiquitin-conjugating enzyme]-L-cysteine + N(6)-ubiquitinyl-[acceptor protein]-L-lysine.. Its pathway is protein modification; protein ubiquitination. May be involved in the early steps of the plant defense signaling pathway. The protein is RING-H2 finger protein ATL80 (ATL80) of Arabidopsis thaliana (Mouse-ear cress).